Consider the following 395-residue polypeptide: Mevalonate kinase (395 aa).

ATP-binding positions include Lys-13, Asn-55, Asn-104, Ser-135, and 140-146 (GAGLGSS). The Proton donor role is filled by Ser-146. Mg(2+) is bound by residues Ser-146 and Glu-193. Asp-204 (proton acceptor) is an active-site residue.

This sequence belongs to the GHMP kinase family. Mevalonate kinase subfamily. As to quaternary structure, homodimer. The cofactor is Mg(2+).

It localises to the cytoplasm. Its subcellular location is the peroxisome. The catalysed reaction is (R)-mevalonate + ATP = (R)-5-phosphomevalonate + ADP + H(+). It participates in isoprenoid biosynthesis; isopentenyl diphosphate biosynthesis via mevalonate pathway; isopentenyl diphosphate from (R)-mevalonate: step 1/3. Its activity is regulated as follows. Farnesyl pyrophosphate and geranyl pyrophosphate inhibit mevalonate kinase activity by binding competitively at the ATP-binding sites. In terms of biological role, catalyzes the phosphorylation of mevalonate to mevalonate 5-phosphate, a key step in isoprenoid and cholesterol biosynthesis. The protein is Mevalonate kinase of Mus musculus (Mouse).